The primary structure comprises 176 residues: Peroxynitrite isomerase 1 (176 aa).

The tract at residues methionine 1–proline 23 is disordered. The segment covering serine 8–alanine 20 has biased composition (low complexity). The GXWXGXG motif lies at glycine 37–glycine 43. Residue histidine 168 coordinates heme b.

It belongs to the nitrobindin family. In terms of assembly, homodimer. Requires heme b as cofactor.

The catalysed reaction is peroxynitrite = nitrate. Its pathway is nitrogen metabolism. In terms of biological role, heme-binding protein able to scavenge peroxynitrite and to protect free L-tyrosine against peroxynitrite-mediated nitration, by acting as a peroxynitrite isomerase that converts peroxynitrite to nitrate. Therefore, this protein likely plays a role in peroxynitrite sensing and in the detoxification of reactive nitrogen and oxygen species (RNS and ROS, respectively). Is able to bind nitric oxide (NO) in vitro, but may act as a sensor of peroxynitrite levels in vivo. This is Peroxynitrite isomerase 1 from Rhodococcus jostii (strain RHA1).